We begin with the raw amino-acid sequence, 149 residues long: Calmodulin (149 aa).

Ala-2 carries the post-translational modification N-acetylalanine. EF-hand domains lie at 8 to 43 (EQISEFKEAFSLFDKDGDGTITTKELGTVMRSLGQN), 44 to 79 (PTEAELQDMINEVDADGNGTIDFPEFLTMMARKMRD), 81 to 116 (DSEEEIKEAFKVFDKDGNGYISAAELRHVMTNLGEK), and 117 to 149 (LTDNEVDEMIREADIDGDGQINYEEFVKMMLSK). Asp-21, Asp-23, Asp-25, Thr-27, Glu-32, Asp-57, Asp-59, Asn-61, Thr-63, Glu-68, Asp-94, Asp-96, Asn-98, Tyr-100, Glu-105, Asp-130, Asp-132, Asp-134, Gln-136, and Glu-141 together coordinate Ca(2+).

It belongs to the calmodulin family. Trimethylation of Lys-116 observed in other calmodulins is absent here.

Functionally, calmodulin mediates the control of a large number of enzymes, ion channels and other proteins by Ca(2+). Among the enzymes to be stimulated by the calmodulin-Ca(2+) complex are a number of protein kinases and phosphatases. The protein is Calmodulin (CMD1) of Pleurotus cornucopiae (Cornucopia mushroom).